The primary structure comprises 59 residues: Large ribosomal subunit protein uL30 (59 aa).

This sequence belongs to the universal ribosomal protein uL30 family. Part of the 50S ribosomal subunit.

The chain is Large ribosomal subunit protein uL30 from Herminiimonas arsenicoxydans.